We begin with the raw amino-acid sequence, 1432 residues long: Probable ATP-dependent RNA helicase spindle-E (1432 aa).

Residues 124 to 291 (LAAINAHPVV…FTTTNSVPPV (168 aa)) enclose the Helicase ATP-binding domain. 137–144 (GQTGCGKT) serves as a coordination point for ATP. Residues 237–240 (DEVH) carry the DEAH box motif. Positions 337–524 (KIIMVIDNME…NSVLRAKELE (188 aa)) constitute a Helicase C-terminal domain. The Tudor domain maps to 936–999 (AGAITKGMMV…RLMPKELIQQ (64 aa)).

This sequence belongs to the DEAD box helicase family. DEAH subfamily.

Its subcellular location is the cytoplasm. It catalyses the reaction ATP + H2O = ADP + phosphate + H(+). Functionally, probable ATP-binding RNA helicase which plays a central role during spermatogenesis and oogenesis by repressing transposable elements and preventing their mobilization, which is essential for the germline integrity. Acts via the piRNA metabolic process, which mediates the repression of transposable elements during meiosis by forming complexes composed of piRNAs and Piwi and govern the methylation and subsequent repression of transposons. Involved in the repression of LTR retrotransposon copia. Also involved in telomere regulation by repressing specialized telomeric retroelements HeT-A, TAHRE, and TART; Drosophila telomeres being maintained by transposition of specialized telomeric retroelements. Involved in telomeric trans-silencing, a repression mechanism by which a transposon or a transgene inserted in subtelomeric heterochromatin has the capacity to repress in trans in the female germline, a homologous transposon, or transgene located in euchromatin. Involved in the repression of testis-expressed Stellate genes by the homologous Su(Ste) repeats. Required for anteroposterior and dorsoventral axis formation during oogenesis. This is Probable ATP-dependent RNA helicase spindle-E (spn-E) from Drosophila erecta (Fruit fly).